Consider the following 735-residue polypeptide: Transcription factor RFX4 (735 aa).

The disordered stretch occupies residues 27–59 (NKRYSSHTSLGNVSNDENEEKENNRASKPHSTP). Over residues 32–41 (SHTSLGNVSN) the composition is skewed to polar residues. Residues 44 to 126 (NEEKENNRAS…RRLGTRGQSK (83 aa)) mediate DNA binding. Positions 61–136 (TLQWLEENYE…YHYYGIAVKE (76 aa)) form a DNA-binding region, RFX-type winged-helix. Positions 315 to 487 (RFSQILRRQT…NELMRAMKGE (173 aa)) are necessary for dimerization. The segment at 501 to 538 (EATPPTPSPGPSFSPAKSATSVEVPPPSSPVSNPSPEY) is disordered.

It belongs to the RFX family. As to quaternary structure, homodimer. Heterodimer with RFX2 and RFX3. Binds DNA. Interacts with GPS2. In terms of tissue distribution, isoform 1: Brain-specific. Isoform 2: Testis-specific. Isoform 1: Highly expressed in the suprachiasmatic nucleus, the central pacemaker site of the circadian clock (at protein level).

Its subcellular location is the nucleus. Its function is as follows. Transcription factor that plays a role in early brain development. May activate transcription by interacting directly with the X-box. May activate transcription from CX3CL1 promoter through the X-box during brain development. May be required for neural tube ciliogenesis during embryogenesis. This is Transcription factor RFX4 (Rfx4) from Mus musculus (Mouse).